A 340-amino-acid polypeptide reads, in one-letter code: Deubiquitinase SseL (340 aa).

The active site involves His223. The active-site Nucleophile is the Cys285.

It belongs to the peptidase C79 family.

It localises to the secreted. It is found in the host cytoplasm. Effector proteins function to alter host cell physiology and promote bacterial survival in host tissues. This protease targets the host cell ubiquitin pathway by acting as a deubiquitinase in infected host cells. This chain is Deubiquitinase SseL (sseL), found in Salmonella paratyphi B (strain ATCC BAA-1250 / SPB7).